Reading from the N-terminus, the 356-residue chain is Pyruvate dehydrogenase E1 component subunit beta, mitochondrial (356 aa).

The N-terminal 25 residues, 1-25 (MLSSILKKIQPSLLVNFRIITRTYA), are a transit peptide targeting the mitochondrion. E85 is a binding site for thiamine diphosphate. I138, A186, I187, D189, and N191 together coordinate K(+).

In terms of assembly, tetramer of 2 alpha and 2 beta subunits. Thiamine diphosphate is required as a cofactor.

The protein localises to the mitochondrion matrix. It catalyses the reaction N(6)-[(R)-lipoyl]-L-lysyl-[protein] + pyruvate + H(+) = N(6)-[(R)-S(8)-acetyldihydrolipoyl]-L-lysyl-[protein] + CO2. The pyruvate dehydrogenase complex catalyzes the overall conversion of pyruvate to acetyl-CoA and CO(2). It contains multiple copies of three enzymatic components: pyruvate dehydrogenase (E1), dihydrolipoamide acetyltransferase (E2) and lipoamide dehydrogenase (E3). This Dictyostelium discoideum (Social amoeba) protein is Pyruvate dehydrogenase E1 component subunit beta, mitochondrial (pdhB).